The following is a 210-amino-acid chain: Ribonuclease HII (210 aa).

The 193-residue stretch at 18 to 210 folds into the RNase H type-2 domain; sequence GLIAGVDEVG…FKPVKALLGL (193 aa). Asp-24, Glu-25, and Asp-116 together coordinate a divalent metal cation.

The protein belongs to the RNase HII family. It depends on Mn(2+) as a cofactor. Requires Mg(2+) as cofactor.

The protein localises to the cytoplasm. The catalysed reaction is Endonucleolytic cleavage to 5'-phosphomonoester.. Functionally, endonuclease that specifically degrades the RNA of RNA-DNA hybrids. In Shewanella baltica (strain OS223), this protein is Ribonuclease HII.